A 631-amino-acid polypeptide reads, in one-letter code: MSTTTLTRREQRAKAQHFIDTLEGTAFPNSKRIYVTGSQHDIRVPMREIQLSPTLIGGSKDNPQFEENEAVPVYDTSGPYGDPEVAINVQQGLAKLRQPWIDARNDSEELDDRSSAYTRERLADDGLDDLRFTGLLTPKRAKAGHRVTQLHYARQGIVTPEMEFIAIRENMGRERIRSEVLRHQHPGMNFGARLPENITPEFVRDEVAAGRAIIPANINHPESEPMIIGRNFLVKVNANIGNSAVTSSIEEEVEKLVWSTRWGADTVMDLSTGRYIHETREWILRNSPVPIGTVPIYQALEKVNGIAEDLTWEAFRDTLLEQAEQGVDYFTIHAGVLLRYVPMTAKRLTGIVSRGGSIMAKWCLSHHKENFLFEHFREICEICAAYDVSLSLGDGLRPGSIQDANDEAQFSELHTLGELTKIAWEYDVQVMIEGPGHVPMHMIQRNMTEELESCHEAPFYTLGPLTTDIAPGYDHFTSGIGAAMIGWFGCAMLCYVTPKEHLGLPNKEDVKQGLITYKIAAHAADLAKGHPGAQIRDNAMSKARFEFRWEDQFNLALDPFTARAYHDETLPQESGKVAHFCSMCGPKFCSMKISQEVRDYAAAQTIEVGMADMSESFRAKGGEIYLKREEA.

Substrate is bound by residues Asn-239, Met-268, Tyr-297, His-333, 353–355 (SRG), 394–397 (DGLR), and Glu-433. His-437 lines the Zn(2+) pocket. A substrate-binding site is contributed by Tyr-460. His-501 contributes to the Zn(2+) binding site. [4Fe-4S] cluster is bound by residues Cys-581, Cys-584, and Cys-589.

This sequence belongs to the ThiC family. As to quaternary structure, homodimer. [4Fe-4S] cluster serves as cofactor.

The catalysed reaction is 5-amino-1-(5-phospho-beta-D-ribosyl)imidazole + S-adenosyl-L-methionine = 4-amino-2-methyl-5-(phosphooxymethyl)pyrimidine + CO + 5'-deoxyadenosine + formate + L-methionine + 3 H(+). It participates in cofactor biosynthesis; thiamine diphosphate biosynthesis. Its function is as follows. Catalyzes the synthesis of the hydroxymethylpyrimidine phosphate (HMP-P) moiety of thiamine from aminoimidazole ribotide (AIR) in a radical S-adenosyl-L-methionine (SAM)-dependent reaction. The sequence is that of Phosphomethylpyrimidine synthase from Salmonella paratyphi A (strain AKU_12601).